The chain runs to 77 residues: Small VCP/p97-interacting protein (77 aa).

A disordered region spans residues 1–77; that stretch reads MGLCFPCPAE…TAGGLRWTVS (77 aa). Residue G2 is the site of N-myristoyl glycine attachment. 2 S-palmitoyl cysteine lipidation sites follow: C4 and C7. Basic and acidic residues predominate over residues 18-37; it reads PEEKREKLAEAAERRQKEAA. The segment at 21–33 is VCP/p97-interacting motif (VIM); the sequence is KREKLAEAAERRQ. The residue at position 46 (S46) is a Phosphoserine.

It belongs to the SVIP family. Interacts (via VIM motif) with VCP/p97. Forms a complex with VCP/p97 and DERL1. As to expression, highly expressed in the medulla spinalis, adrenal gland, cerebrum, cerebellum, and sciatic nerve.

The protein localises to the membrane. Its subcellular location is the smooth endoplasmic reticulum membrane. It is found in the golgi apparatus membrane. It localises to the cell membrane. The protein resides in the lysosome membrane. In terms of biological role, negative regulator of the ER-associated degradation pathway (ERAD) of misfolded proteins. It competes with AMFR/gp78 for binding VCP/p97, and inhibits AMFR/gp78-VCP/p97 complex formation that is required for degradation of ERAD substrates. Involved in the regulation of adrenal cortisol and dehydroepiandrosterone (DHEA) biosynthesis. The polypeptide is Small VCP/p97-interacting protein (Svip) (Mus musculus (Mouse)).